Reading from the N-terminus, the 234-residue chain is Large ribosomal subunit protein uL1 (234 aa).

Belongs to the universal ribosomal protein uL1 family. In terms of assembly, part of the 50S ribosomal subunit.

Functionally, binds directly to 23S rRNA. The L1 stalk is quite mobile in the ribosome, and is involved in E site tRNA release. In terms of biological role, protein L1 is also a translational repressor protein, it controls the translation of the L11 operon by binding to its mRNA. The protein is Large ribosomal subunit protein uL1 of Pectobacterium carotovorum subsp. carotovorum (strain PC1).